We begin with the raw amino-acid sequence, 236 residues long: 2,3,4,5-tetrahydropyridine-2,6-dicarboxylate N-acetyltransferase (236 aa).

The protein belongs to the transferase hexapeptide repeat family. DapH subfamily.

It carries out the reaction (S)-2,3,4,5-tetrahydrodipicolinate + acetyl-CoA + H2O = L-2-acetamido-6-oxoheptanedioate + CoA. Its pathway is amino-acid biosynthesis; L-lysine biosynthesis via DAP pathway; LL-2,6-diaminopimelate from (S)-tetrahydrodipicolinate (acetylase route): step 1/3. Functionally, catalyzes the transfer of an acetyl group from acetyl-CoA to tetrahydrodipicolinate. This Pediococcus pentosaceus (strain ATCC 25745 / CCUG 21536 / LMG 10740 / 183-1w) protein is 2,3,4,5-tetrahydropyridine-2,6-dicarboxylate N-acetyltransferase.